A 384-amino-acid chain; its full sequence is tRNA-specific 2-thiouridylase MnmA (384 aa).

ATP-binding positions include 21–28 (GMSGGVDS) and methionine 47. The tract at residues 107–109 (NPD) is interaction with target base in tRNA. Cysteine 112 functions as the Nucleophile in the catalytic mechanism. Cysteine 112 and cysteine 208 form a disulfide bridge. Glycine 136 provides a ligand contact to ATP. Residues 158–160 (KDQ) are interaction with tRNA. Cysteine 208 (cysteine persulfide intermediate) is an active-site residue. The interaction with tRNA stretch occupies residues 320–321 (RY).

The protein belongs to the MnmA/TRMU family.

The protein resides in the cytoplasm. It carries out the reaction S-sulfanyl-L-cysteinyl-[protein] + uridine(34) in tRNA + AH2 + ATP = 2-thiouridine(34) in tRNA + L-cysteinyl-[protein] + A + AMP + diphosphate + H(+). Catalyzes the 2-thiolation of uridine at the wobble position (U34) of tRNA, leading to the formation of s(2)U34. The polypeptide is tRNA-specific 2-thiouridylase MnmA (Chromohalobacter salexigens (strain ATCC BAA-138 / DSM 3043 / CIP 106854 / NCIMB 13768 / 1H11)).